We begin with the raw amino-acid sequence, 284 residues long: 2,3,4,5-tetrahydropyridine-2,6-dicarboxylate N-succinyltransferase (284 aa).

2 residues coordinate substrate: arginine 111 and aspartate 148.

Belongs to the transferase hexapeptide repeat family. As to quaternary structure, homotrimer.

The protein resides in the cytoplasm. It carries out the reaction (S)-2,3,4,5-tetrahydrodipicolinate + succinyl-CoA + H2O = (S)-2-succinylamino-6-oxoheptanedioate + CoA. It participates in amino-acid biosynthesis; L-lysine biosynthesis via DAP pathway; LL-2,6-diaminopimelate from (S)-tetrahydrodipicolinate (succinylase route): step 1/3. The protein is 2,3,4,5-tetrahydropyridine-2,6-dicarboxylate N-succinyltransferase of Brucella suis (strain ATCC 23445 / NCTC 10510).